The sequence spans 87 residues: Small ribosomal subunit protein bS20 (87 aa).

A disordered region spans residues 1 to 27; the sequence is MANIKSAKKRAVQSEKRRKHNASRRSM.

Belongs to the bacterial ribosomal protein bS20 family.

In terms of biological role, binds directly to 16S ribosomal RNA. The polypeptide is Small ribosomal subunit protein bS20 (Pectobacterium carotovorum subsp. carotovorum (strain PC1)).